We begin with the raw amino-acid sequence, 269 residues long: Chymotrypsin-like elastase family member 2B (269 aa).

The signal sequence occupies residues M1–S16. The propeptide at C17 to R28 is activation peptide. Residues M29–A267 form the Peptidase S1 domain. A disulfide bridge links C58 with C74. Residues H73 and D121 each act as charge relay system in the active site. 3 disulfide bridges follow: C155–C222, C186–C202, and C212–C243. S216 (charge relay system) is an active-site residue.

It belongs to the peptidase S1 family. Elastase subfamily. In terms of tissue distribution, pancreas.

The protein localises to the secreted. The enzyme catalyses Preferential cleavage: Leu-|-Xaa, Met-|-Xaa and Phe-|-Xaa. Hydrolyzes elastin.. In terms of biological role, acts upon elastin. This chain is Chymotrypsin-like elastase family member 2B (CELA2B), found in Homo sapiens (Human).